Consider the following 211-residue polypeptide: WUSCHEL-related homeobox 14 (211 aa).

Residues 91-155 (STRHRWTPTS…NRRARSKRKQ (65 aa)) constitute a DNA-binding region (homeobox; WUS-type). Residues 147 to 183 (RRARSKRKQPQTTTANGQADDVAVTTEERRSCGDSGG) are disordered.

It belongs to the WUS homeobox family. In terms of tissue distribution, expressed in root vasculature, pericycle and stamen. Expressed in the procambium during stem maturation.

It is found in the nucleus. Functionally, acts redundantly with WOX4 downstream of the TDR/PXY receptor kinase to regulate procambial cell proliferation and differentiation in vascular tissue, independently of any role in vascular. Involved in the regulation of gibberellin (GA) biosynthesis pathway. Positively regulates the expression of the GA biosynthesis gene GA3OX1, and negatively regulates the expression of GA2OX1 during secondary growth, which increases bioactive GA content in the inflorescence stem. Promotes vascular cell differentiation in the inflorescence stem. Its function is as follows. Transcription factor which may be involved in developmental processes. This Arabidopsis thaliana (Mouse-ear cress) protein is WUSCHEL-related homeobox 14 (WOX14).